The following is a 371-amino-acid chain: NDMA-dependent alcohol dehydrogenase (371 aa).

7 residues coordinate Zn(2+): cysteine 40, histidine 61, cysteine 91, cysteine 94, cysteine 97, cysteine 105, and cysteine 167.

It belongs to the zinc-containing alcohol dehydrogenase family. As to quaternary structure, homotrimer. NADH is required as a cofactor.

It catalyses the reaction N,N-dimethyl-4-nitrosoaniline + a primary alcohol = 4-(hydroxylamino)-N,N-dimethylaniline + an aldehyde. The enzyme catalyses ethanol + A = acetaldehyde + AH2. Its activity is regulated as follows. Inhibited by trans-4-(N,N-dimethylamino)-cinnamaldehyde through direct binding to the catalytic zinc ion in a substrate-like geometry. Isobutyramide acts as a competitive inhibitor with respect to the electron acceptor NDMA. Acetaldehyde, AMP, ADP, ATP, as well as CuSO(4), FeSO(4), HgCl(2), NiCl(2), ZnSO(4), KCN, and NaN(3) are additional inhibitors of the catalytic activity. Catalytically different from common alcohol dehydrogenases. Effective in oxidizing ethanol, other primary alcohols and benzylalcohol only in the presence of p-nitroso-N,N-dimethylaniline (NDMA) as an electron acceptor. NADH acts as a cofactor here instead as a coenzyme. The chain is NDMA-dependent alcohol dehydrogenase from Amycolatopsis methanolica.